Here is an 80-residue protein sequence, read N- to C-terminus: Raniseptin-5 (80 aa).

A signal peptide spans 1–22 (MAFLKKSLFLVLFLGIVSLSIC). Positions 23–49 (EEEKREGEEEEKQEEENEELSEEELRE) are excised as a propeptide.

It belongs to the frog skin active peptide (FSAP) family. Dermaseptin subfamily. As to expression, expressed by the skin glands.

It is found in the secreted. In terms of biological role, has antibacterial activity. In Boana raniceps (Chaco tree frog), this protein is Raniseptin-5.